Here is a 400-residue protein sequence, read N- to C-terminus: Probable RNA polymerase sigma factor RfaY (400 aa).

The Polymerase core binding motif lies at 62–75; the sequence is WQRLAQLHQPASFL. Residues 165–184 constitute a DNA-binding region (H-T-H motif); that stretch reads SDAAVRKRLSRARATVRNEL.

The protein belongs to the sigma-70 factor family. ECF subfamily.

Functionally, sigma factors are initiation factors that promote the attachment of RNA polymerase to specific initiation sites and are then released. This sigma factor is involved in lipopolysaccharide biosynthesis and pathogenicity. This chain is Probable RNA polymerase sigma factor RfaY (rfaY), found in Xanthomonas campestris pv. campestris (strain ATCC 33913 / DSM 3586 / NCPPB 528 / LMG 568 / P 25).